We begin with the raw amino-acid sequence, 1342 residues long: DNA-directed RNA polymerase subunit beta (1342 aa).

Belongs to the RNA polymerase beta chain family. The RNAP catalytic core consists of 2 alpha, 1 beta, 1 beta' and 1 omega subunit. When a sigma factor is associated with the core the holoenzyme is formed, which can initiate transcription.

The enzyme catalyses RNA(n) + a ribonucleoside 5'-triphosphate = RNA(n+1) + diphosphate. Functionally, DNA-dependent RNA polymerase catalyzes the transcription of DNA into RNA using the four ribonucleoside triphosphates as substrates. In Buchnera aphidicola subsp. Acyrthosiphon pisum (strain Tuc7), this protein is DNA-directed RNA polymerase subunit beta.